Reading from the N-terminus, the 585-residue chain is Pyruvate kinase (585 aa).

Substrate is bound at residue arginine 32. K(+)-binding residues include asparagine 34, serine 36, aspartate 66, and threonine 67. Asparagine 34–histidine 37 is a binding site for ATP. 2 residues coordinate ATP: arginine 73 and lysine 156. Glutamate 221 contributes to the Mg(2+) binding site. The substrate site is built by glycine 244, aspartate 245, and threonine 277. Aspartate 245 provides a ligand contact to Mg(2+).

It belongs to the pyruvate kinase family. The protein in the C-terminal section; belongs to the PEP-utilizing enzyme family. Mg(2+) serves as cofactor. Requires K(+) as cofactor.

The catalysed reaction is pyruvate + ATP = phosphoenolpyruvate + ADP + H(+). It participates in carbohydrate degradation; glycolysis; pyruvate from D-glyceraldehyde 3-phosphate: step 5/5. In Staphylococcus aureus (strain bovine RF122 / ET3-1), this protein is Pyruvate kinase (pyk).